The primary structure comprises 78 residues: Exodeoxyribonuclease 7 small subunit (78 aa).

It belongs to the XseB family. In terms of assembly, heterooligomer composed of large and small subunits.

The protein resides in the cytoplasm. It carries out the reaction Exonucleolytic cleavage in either 5'- to 3'- or 3'- to 5'-direction to yield nucleoside 5'-phosphates.. Bidirectionally degrades single-stranded DNA into large acid-insoluble oligonucleotides, which are then degraded further into small acid-soluble oligonucleotides. This Cutibacterium acnes (strain DSM 16379 / KPA171202) (Propionibacterium acnes) protein is Exodeoxyribonuclease 7 small subunit.